Reading from the N-terminus, the 386-residue chain is NifS-like protein (386 aa).

Residues 58–59 and 184–186 each bind pyridoxal 5'-phosphate; these read SE and SIN.

The protein belongs to the class-V pyridoxal-phosphate-dependent aminotransferase family. NifS/IscS subfamily. Pyridoxal 5'-phosphate is required as a cofactor.

Its subcellular location is the virion. The protein is NifS-like protein of Ornithodoros (relapsing fever ticks).